A 378-amino-acid polypeptide reads, in one-letter code: Packaging protein 3 (378 aa).

Disordered regions lie at residues 1–73 and 355–378; these read MHPV…EGPV and SRPP…DDFI. The segment at 1 to 178 is interaction with packaging protein 1; that stretch reads MHPVLQSVRN…AFGEELRNTC (178 aa). Low complexity-rich tracts occupy residues 16 to 35 and 49 to 58; these read GGPH…SVRR and PGAGATPTAG. Residue S362 is modified to Phosphoserine; by host. Residues 363–378 are compositionally biased toward acidic residues; that stretch reads FADEGPSESDDEDDFI.

The protein belongs to the adenoviridae packaging protein 3 family. As to quaternary structure, part of the genome packaging complex composed of packaging proteins 1, 2 and 3; this complex specifically binds to the packaging sequence on the left end of viral genomic DNA and performs packaging of the viral genome. Interacts with hexon-linking protein IIIa; this interaction is required to promote correct genome packaging. Post-translationally, cleaved at different sites by the viral protease during virion maturation.

Its subcellular location is the host nucleus. Its function is as follows. Involved in viral genome packaging through its interaction with packaging proteins 1 and 2. After proteolytic cleavage by adenovirus protease, L1 52/55k protein is removed from the capsid during viral maturation. This chain is Packaging protein 3, found in Galliformes (FAdV-1).